Consider the following 353-residue polypeptide: Photosystem II protein D1 (353 aa).

The residue at position 2 (Thr2) is an N-acetylthreonine. Thr2 bears the Phosphothreonine mark. 3 helical membrane-spanning segments follow: residues 29 to 46 (YIGW…TATS), 118 to 133 (HFLL…EWEL), and 142 to 156 (WIAV…AATA). His118 is a chlorophyll a binding site. Residue Tyr126 participates in pheophytin a binding. Residues Asp170 and Glu189 each contribute to the [CaMn4O5] cluster site. The helical transmembrane segment at 197–218 (FHMLGVAGVFGGSLFSAMHGSL) threads the bilayer. His198 is a binding site for chlorophyll a. A quinone-binding positions include His215 and 264-265 (SF). Residue His215 participates in Fe cation binding. His272 lines the Fe cation pocket. A helical membrane pass occupies residues 274–288 (FLAAWPVVGIWFTSL). Residues His332, Glu333, Asp342, and Ala344 each coordinate [CaMn4O5] cluster. Residues 345–353 (AIDAPSVNG) constitute a propeptide that is removed on maturation.

It belongs to the reaction center PufL/M/PsbA/D family. In terms of assembly, PSII is composed of 1 copy each of membrane proteins PsbA, PsbB, PsbC, PsbD, PsbE, PsbF, PsbH, PsbI, PsbJ, PsbK, PsbL, PsbM, PsbT, PsbX, PsbY, PsbZ, Psb30/Ycf12, at least 3 peripheral proteins of the oxygen-evolving complex and a large number of cofactors. It forms dimeric complexes. It depends on The D1/D2 heterodimer binds P680, chlorophylls that are the primary electron donor of PSII, and subsequent electron acceptors. It shares a non-heme iron and each subunit binds pheophytin, quinone, additional chlorophylls, carotenoids and lipids. D1 provides most of the ligands for the Mn4-Ca-O5 cluster of the oxygen-evolving complex (OEC). There is also a Cl(-1) ion associated with D1 and D2, which is required for oxygen evolution. The PSII complex binds additional chlorophylls, carotenoids and specific lipids. as a cofactor. In terms of processing, tyr-161 forms a radical intermediate that is referred to as redox-active TyrZ, YZ or Y-Z. C-terminally processed by CTPA; processing is essential to allow assembly of the oxygen-evolving complex and thus photosynthetic growth.

The protein localises to the plastid. It localises to the chloroplast thylakoid membrane. The catalysed reaction is 2 a plastoquinone + 4 hnu + 2 H2O = 2 a plastoquinol + O2. In terms of biological role, photosystem II (PSII) is a light-driven water:plastoquinone oxidoreductase that uses light energy to abstract electrons from H(2)O, generating O(2) and a proton gradient subsequently used for ATP formation. It consists of a core antenna complex that captures photons, and an electron transfer chain that converts photonic excitation into a charge separation. The D1/D2 (PsbA/PsbD) reaction center heterodimer binds P680, the primary electron donor of PSII as well as several subsequent electron acceptors. The sequence is that of Photosystem II protein D1 from Coffea arabica (Arabian coffee).